The chain runs to 303 residues: Hemolysin E, chromosomal (303 aa).

Cys-87 and Cys-285 are oxidised to a cystine. A helical membrane pass occupies residues 183 to 203; sequence AGVVAGPFGLIISYSIAAGVV.

In terms of assembly, monomer and oligomer. In periplasm, it is present as a monomer, while in outer membrane vesicles, it oligomerizes to form a pore structure that is active. The pore is formed by a dodecamer. In terms of processing, in periplasm, it forms a disulfide bond between Cys-87 and Cys-285, which prevents the oligomerization. In outer membrane vesicles, the redox status prevents formation of the disulfide bond, leading to oligomerization and pore formation.

The protein resides in the secreted. It is found in the periplasm. It localises to the host cell membrane. In terms of biological role, toxin, which has some hemolytic activity towards mammalian cells. Acts by forming a pore-like structure upon contact with mammalian cells. The sequence is that of Hemolysin E, chromosomal (hlyE) from Escherichia coli (strain K12).